Reading from the N-terminus, the 576-residue chain is CDPK-related kinase 1 (576 aa).

The segment at 1 to 39 (MGICHGKPVEQQSKSLPVSGETNEAPTNSQPPAKSSGFP) is disordered. Residue Gly2 is the site of N-myristoyl glycine attachment. The span at 10–33 (EQQSKSLPVSGETNEAPTNSQPPA) shows a compositional bias: polar residues. One can recognise a Protein kinase domain in the interval 123-385 (YEIDGEVGRG…AAQALCHPWL (263 aa)). Residues 129-137 (VGRGHFGYT) and Lys155 contribute to the ATP site. Asp251 acts as the Proton acceptor in catalysis. A Phosphoserine modification is found at Ser291. At Ser333 the chain carries Phosphoserine; by CPK1 and CPK34. An autoinhibitory domain region spans residues 390-420 (ELKIPSDMIIYKLVKVYIMSTSLRKSALAAL). A calmodulin binding (CaMBD) region spans residues 409-429 (STSLRKSALAALAKTLTVPQL). EF-hand domains lie at 427–463 (PQLA…STDA), 464–499 (MKDS…VYQL), 500–539 (EAME…GPSV), and 542–571 (HVVL…VSSR). Residues Ser442, Asn444, Tyr446, Lys483, Glu488, Asp519, Asn521, Glu528, Asp553, and Lys555 each coordinate Ca(2+). Ser557 is subject to Phosphoserine.

This sequence belongs to the protein kinase superfamily. Ser/Thr protein kinase family. CDPK subfamily. Binds calmodulin (CaM) in a calcium-dependent manner. Interacts with HSFA1A. In terms of processing, autophosphorylated.

It localises to the membrane. The enzyme catalyses L-seryl-[protein] + ATP = O-phospho-L-seryl-[protein] + ADP + H(+). It carries out the reaction L-threonyl-[protein] + ATP = O-phospho-L-threonyl-[protein] + ADP + H(+). Its activity is regulated as follows. Activated by calcium and calmodulin. Autophosphorylation may play an important role in the regulation of the kinase activity. Functionally, may play a role in signal transduction pathways that involve calcium as a second messenger. Serine/threonine kinase that phosphorylates histone H3. Confers thermotolerance; involved in the heat-shock-mediated calmodulin-dependent signal transduction leading to the activation of heat-shock transcription factors (HSFs); phosphorylates HSFA1A. This Arabidopsis thaliana (Mouse-ear cress) protein is CDPK-related kinase 1 (CRK1).